Here is a 662-residue protein sequence, read N- to C-terminus: DNA helicase/primase complex-associated protein (662 aa).

It belongs to the herpesviridae HEPA family. As to quaternary structure, associates with the primase and the helicase to form the helicase-primase complex. Interacts with the origin-binding protein. Interacts with the polymerase catalytic subunit.

It localises to the host nucleus. Its function is as follows. Component of the helicase/primase complex. Unwinds the DNA at the replication forks and generates single-stranded DNA for both leading and lagging strand synthesis. The primase synthesizes short RNA primers on the lagging strand that the polymerase presumably elongates using dNTPs. The primase-associated factor has no known catalytic activity in the complex and may serve to facilitate the formation of the replisome by directly interacting with the origin-binding protein and the polymerase. The chain is DNA helicase/primase complex-associated protein (U74) from Human herpesvirus 6A (strain Uganda-1102) (HHV-6 variant A).